Consider the following 285-residue polypeptide: Nucleotide-binding protein Pfl01_0854 (285 aa).

An ATP-binding site is contributed by 8 to 15 (GRSGSGKS). Position 60-63 (60-63 (DARN)) interacts with GTP.

Belongs to the RapZ-like family.

Its function is as follows. Displays ATPase and GTPase activities. The chain is Nucleotide-binding protein Pfl01_0854 from Pseudomonas fluorescens (strain Pf0-1).